The sequence spans 533 residues: CTP synthase (533 aa).

Residues 1 to 269 (MKKNLKILVI…HEILSSKLNI (269 aa)) are amidoligase domain. Position 16 (S16) interacts with CTP. S16 lines the UTP pocket. Residues 17 to 22 (GIGKGV) and D73 contribute to the ATP site. Mg(2+) contacts are provided by D73 and E143. CTP is bound by residues 150 to 152 (DME), 190 to 195 (KSKPTQ), and K226. UTP contacts are provided by residues 190-195 (KSKPTQ) and K226. A Glutamine amidotransferase type-1 domain is found at 304–533 (YAELDDSYAS…LFLGLIKACI (230 aa)). Position 355 (G355) interacts with L-glutamine. Residue C382 is the Nucleophile; for glutamine hydrolysis of the active site. L-glutamine contacts are provided by residues 383–386 (LGLQ), E406, and R466. Active-site residues include H511 and E513.

It belongs to the CTP synthase family. As to quaternary structure, homotetramer.

It catalyses the reaction UTP + L-glutamine + ATP + H2O = CTP + L-glutamate + ADP + phosphate + 2 H(+). The enzyme catalyses L-glutamine + H2O = L-glutamate + NH4(+). It carries out the reaction UTP + NH4(+) + ATP = CTP + ADP + phosphate + 2 H(+). It functions in the pathway pyrimidine metabolism; CTP biosynthesis via de novo pathway; CTP from UDP: step 2/2. Its activity is regulated as follows. Allosterically activated by GTP, when glutamine is the substrate; GTP has no effect on the reaction when ammonia is the substrate. The allosteric effector GTP functions by stabilizing the protein conformation that binds the tetrahedral intermediate(s) formed during glutamine hydrolysis. Inhibited by the product CTP, via allosteric rather than competitive inhibition. Catalyzes the ATP-dependent amination of UTP to CTP with either L-glutamine or ammonia as the source of nitrogen. Regulates intracellular CTP levels through interactions with the four ribonucleotide triphosphates. In Borreliella burgdorferi (strain ATCC 35210 / DSM 4680 / CIP 102532 / B31) (Borrelia burgdorferi), this protein is CTP synthase.